A 134-amino-acid polypeptide reads, in one-letter code: Putative pre-16S rRNA nuclease (134 aa).

This sequence belongs to the YqgF nuclease family.

It is found in the cytoplasm. Could be a nuclease involved in processing of the 5'-end of pre-16S rRNA. The sequence is that of Putative pre-16S rRNA nuclease from Helicobacter pylori (strain J99 / ATCC 700824) (Campylobacter pylori J99).